Reading from the N-terminus, the 558-residue chain is MSAANPETPNSTISREASTQSSSAAASQGWVLPEGKIVPNTVFVGGIDARMDETEIGSCFGRYGSVKEVKIITNRTGVSKGYGFVSFVNDVDVQKIVGSQIHFHGKKLKLGPAIRKQKLCARHVQPRPLVVNPPPPPQFQNVWRNPNTETYLQPQITPNPVTQHVQAYSAYPHSPGQVITGCQLLVYNYQEYPTYPDSAFQVTTGYQLPVYNYQPFPAYPRSPFQVTAGYQLPVYNYQAFPAYPNSPFQVATGYQFPVYNYQPFPAYPSSPFQVTAGYQLPVYNYQAFPAYPNSPFQVATGYQFPVYNYQAFPAYPNSPVQVTTGYQLPVYNYQAFPAYPNSPVQVTTGYQLPVYNYQAFPAYPSSPFQVTTGYQLPVYNYQAFPAYPSSPFQVTTGYQLPVYNYQAFPAYPSSPFQVTTGYQLPVYNYQAFPAYPSSPFQVTTGYQLPVYNYQAFPAYPSSPFQVTTGYQLPVYNYQAFPAYPSSPFQVTTGYQLPVYNYQAFPAYPNSAVQVTTGYQFHVYNYQMPPQCPVGEQRRNLWTEAYKWWYLVCLIQRRD.

Residues 1-10 are compositionally biased toward polar residues; sequence MSAANPETPN. The segment at 1 to 27 is disordered; the sequence is MSAANPETPNSTISREASTQSSSAAAS. Over residues 11–27 the composition is skewed to low complexity; that stretch reads STISREASTQSSSAAAS. One can recognise an RRM domain in the interval 40 to 115; it reads NTVFVGGIDA…KKLKLGPAIR (76 aa). DAZ domains lie at 167–190, 191–214, 215–238, 239–262, 263–286, 287–310, 311–334, 335–358, 359–382, 383–406, 407–430, 431–454, 455–478, 479–502, and 503–526; these read AYSA…YNYQ, EYPT…YNYQ, PFPA…YNYQ, and AFPA…YNYQ.

This sequence belongs to the RRM DAZ family. Forms a heterodimer with BOLL and DAZL. Interacts with PUM2, DAZAP1, DAZAP2, DZIP1 and DZIP3. Testis specific.

The protein resides in the cytoplasm. It localises to the nucleus. In terms of biological role, RNA-binding protein that plays an essential role in spermatogenesis. May act by binding to the 3'-UTR of mRNAs and regulating their translation. The sequence is that of Deleted in azoospermia protein 2 (DAZ2) from Homo sapiens (Human).